Consider the following 589-residue polypeptide: V-type ATP synthase alpha chain (589 aa).

Residue 239–246 (GPFGAGKT) coordinates ATP.

The protein belongs to the ATPase alpha/beta chains family.

The catalysed reaction is ATP + H2O + 4 H(+)(in) = ADP + phosphate + 5 H(+)(out). Produces ATP from ADP in the presence of a proton gradient across the membrane. The V-type alpha chain is a catalytic subunit. The polypeptide is V-type ATP synthase alpha chain (Treponema denticola (strain ATCC 35405 / DSM 14222 / CIP 103919 / JCM 8153 / KCTC 15104)).